The primary structure comprises 264 residues: Short chain dehydrogenase CPUR_05429 (264 aa).

4 residues coordinate NADP(+): isoleucine 24, aspartate 70, asparagine 97, and arginine 130. Catalysis depends on proton donor residues serine 146 and serine 147. NADP(+) is bound by residues tyrosine 161, lysine 165, and threonine 196. The Proton acceptor role is filled by tyrosine 161. The Lowers pKa of active site Tyr role is filled by lysine 165.

This sequence belongs to the short-chain dehydrogenases/reductases (SDR) family.

Its pathway is pigment biosynthesis. In terms of biological role, short chain dehydrogenase; part of the ergochrome gene cluster responsible for the typical purple-black color of the ergot sclerotia. The ergochrome gene cluster produces several ergot pigments including the yellow ergochrome secalonic acid and its derivatives, as well as the red anthraquinones endocrocin and clavorubin. The pathway begins with the synthesis of atrochrysone thioester by the polyketide synthase (PKS) CPUR_05437. The atrochrysone carboxyl ACP thioesterase CPUR_05436 then breaks the thioester bond and releases the atrochrysone carboxylic acid from CPUR_05437. The atrochrysone carboxylic acid is then converted to atrochrysone which is further transformed into emodin anthrone. The next step is performed by the anthrone oxygenase CPUR_05434 that catalyzes the oxidation of emodinanthrone to emodin. Emodin is further modified to yield monodictyphenone via several steps involving CPUR_05427, CPUR_05428, CPUR_05429 and CPUR_05430. The short chain dehydrogenase/reductase CPUR_05418 then catalyzes the C-5 ketoreduction to give the xanthone skeleton of the monomeric units. Ergochromes formation requires further dimerization steps of different xanthone units, probably catalyzed by the cytochrome P450 monooxygenase CPUR_05419. CPUR_05425, CPUR_05426 and CPUR_05431 are unique to Claviceps, thus it is likely that they are involved in further modification of xanthone units or in their dimerization. The yellow ergochromes and the red anthraquinone pigments endocrocin and clavorubin are products from the same PKS derived precursors and the latter are likely shunt products in the pathway of xanthone biosynthesis. It is proposed that atrochrysone carboxylic acid released from the PKS CPUR_05437 can also be converted to endocrocin anthrone which is further oxidized into endocrocin by CPUR_05435. Endocrocin could be then modified to clavorubin, possibly by CPUR_05423 and CPUR_05431. Clavorubin is the principal anthraquinone metabolite produced by the cluster with a much higher yield compared to endocrocin. In Claviceps purpurea (strain 20.1) (Ergot fungus), this protein is Short chain dehydrogenase CPUR_05429.